Consider the following 237-residue polypeptide: Lectin alpha chain (237 aa).

Mn(2+)-binding residues include Glu8 and Asp10. 4 residues coordinate Ca(2+): Asp10, Tyr12, Asn14, and Asp19. Tyr12 contributes to the a carbohydrate binding site. Residues Asp19 and His24 each coordinate Mn(2+). 99 to 100 serves as a coordination point for a carbohydrate; that stretch reads LY. Asp208 lines the Ca(2+) pocket. Arg228 contacts a carbohydrate.

It belongs to the leguminous lectin family. In terms of assembly, homotetramer. In terms of processing, the beta and gamma chains are produced by partial proteolytic processing of the lectin alpha chain by an asparaginyl endopeptidase.

The protein resides in the vacuole. It localises to the aleurone grain. Its function is as follows. D-mannose/D-glucose-binding lectin with hemagglutinating activity towards rabbit and human erythrocytes. In rats, elicits an acute inflammatory response by inducing neutrophil migration and induces dose-dependent paw edema. The protein is Lectin alpha chain of Macropsychanthus wilsonii (Wilson's clusterpea).